A 42-amino-acid chain; its full sequence is DQDCLPGWSSHEGHCYKVFNLDKTWEDAEKFCTEQPSNGHLV.

The C-type lectin domain maps to 1–42; sequence DQDCLPGWSSHEGHCYKVFNLDKTWEDAEKFCTEQPSNGHLV. An intrachain disulfide couples cysteine 4 to cysteine 15.

In terms of assembly, heterodimer of subunits alpha and beta; disulfide-linked. Requires Ca(2+) as cofactor. Post-translationally, glycosylated. As to expression, expressed by the venom gland.

It is found in the secreted. In terms of biological role, binds to the platelet GPIb/IX/V receptor system and inhibits ristocetin-induced platelet aggregation in human platelet-rich plasma. Strongly inhibits platelet aggregation induced by ADP, calcium ionophore, thrombin and collagen. Does not inhibit U46619-induced platelet aggregation. The protein is Snaclec lebecetin subunit alpha of Macrovipera lebetinus (Levantine viper).